The chain runs to 274 residues: MSYIIKEIEEAWQIKENILHDSSKLIKLKKILNESIASLNQGIIRVCEKQGNQWKVNEWVKKAILLYFITTESQLYNNNYNSWYDKVAPKFPADTDKNIFKEAAIRKVPGAIVRTGTYIAKNVVIMPSFINIGAYIDEGTMIDTWATIGSCAQIGKNCHISGGAGIGGVLEPLQAKPVIIEDNCFVGARSEIAEGVIVEEGSVISMGVFIGSSTKIVYRDTGEIIYGRIPAYSVVVPGILPPPEVGKPGLYCVVIVKQVDKTTRGKVSINDLLR.

Substrate is bound by residues R106 and D143.

The protein belongs to the transferase hexapeptide repeat family. In terms of assembly, homotrimer.

The protein resides in the cytoplasm. The catalysed reaction is (S)-2,3,4,5-tetrahydrodipicolinate + succinyl-CoA + H2O = (S)-2-succinylamino-6-oxoheptanedioate + CoA. It functions in the pathway amino-acid biosynthesis; L-lysine biosynthesis via DAP pathway; LL-2,6-diaminopimelate from (S)-tetrahydrodipicolinate (succinylase route): step 1/3. This chain is 2,3,4,5-tetrahydropyridine-2,6-dicarboxylate N-succinyltransferase, found in Rickettsia prowazekii (strain Madrid E).